The chain runs to 208 residues: MKVKICGITHPDDAREAAKAGADYIGMIFAKDSRRCVSEEKAKYIVEAIQEGNSEPVGVFPEHSVEEILAITEATGITSIQLSGEDILFKFSQLREHFSIFYVVSVYSNGQPSAALPPMNDAVTVVYDHIGGERGSPFDWKAFSPFQHNNWMLGGGVNLWNIKEGISLLNPRGIDVSSGVERPGILRKDIFLMQALINSAKELSSSTL.

The protein belongs to the TrpF family.

It catalyses the reaction N-(5-phospho-beta-D-ribosyl)anthranilate = 1-(2-carboxyphenylamino)-1-deoxy-D-ribulose 5-phosphate. It participates in amino-acid biosynthesis; L-tryptophan biosynthesis; L-tryptophan from chorismate: step 3/5. In Chlamydia trachomatis serovar L2 (strain ATCC VR-902B / DSM 19102 / 434/Bu), this protein is N-(5'-phosphoribosyl)anthranilate isomerase.